Here is a 181-residue protein sequence, read N- to C-terminus: Tetratricopeptide repeat protein 36 homolog (181 aa).

TPR repeat units follow at residues Ala-46–Arg-79, Ser-81–His-113, and Ala-118–Phe-151.

This sequence belongs to the TTC36 family.

This is Tetratricopeptide repeat protein 36 homolog (ttc36) from Nematostella vectensis (Starlet sea anemone).